A 524-amino-acid chain; its full sequence is Light-independent protochlorophyllide reductase subunit B (524 aa).

Position 36 (D36) interacts with [4Fe-4S] cluster. The Proton donor role is filled by D290. 425–426 is a binding site for substrate; the sequence is GL.

It belongs to the ChlB/BchB/BchZ family. In terms of assembly, protochlorophyllide reductase is composed of three subunits; ChlL, ChlN and ChlB. Forms a heterotetramer of two ChlB and two ChlN subunits. [4Fe-4S] cluster serves as cofactor.

The enzyme catalyses chlorophyllide a + oxidized 2[4Fe-4S]-[ferredoxin] + 2 ADP + 2 phosphate = protochlorophyllide a + reduced 2[4Fe-4S]-[ferredoxin] + 2 ATP + 2 H2O. Its pathway is porphyrin-containing compound metabolism; chlorophyll biosynthesis (light-independent). Component of the dark-operative protochlorophyllide reductase (DPOR) that uses Mg-ATP and reduced ferredoxin to reduce ring D of protochlorophyllide (Pchlide) to form chlorophyllide a (Chlide). This reaction is light-independent. The NB-protein (ChlN-ChlB) is the catalytic component of the complex. This Synechococcus sp. (strain CC9605) protein is Light-independent protochlorophyllide reductase subunit B.